The sequence spans 340 residues: Phosphate acyltransferase (340 aa).

The protein belongs to the PlsX family. Homodimer. Probably interacts with PlsY.

Its subcellular location is the cytoplasm. It carries out the reaction a fatty acyl-[ACP] + phosphate = an acyl phosphate + holo-[ACP]. The protein operates within lipid metabolism; phospholipid metabolism. Catalyzes the reversible formation of acyl-phosphate (acyl-PO(4)) from acyl-[acyl-carrier-protein] (acyl-ACP). This enzyme utilizes acyl-ACP as fatty acyl donor, but not acyl-CoA. In Trichodesmium erythraeum (strain IMS101), this protein is Phosphate acyltransferase.